Consider the following 556-residue polypeptide: MDEIQIASILKSSELFPIPQGVKLSYGTAGFRGDAKLLESTVYRVGILSALRSLKLGSATVGLMITASHNKVSDNGIKVSDPSGFMLSQEWEPFADQIANASSPEELVSLIRKFMEKEEIAIGENNKGAEVWLGRDTRPSGESLLRAGEIGVGSILGSVAIDIGILTTPQLHWMVRAKNKGLKATENDYFENLSTSFRCLIDLIPSSGNDKLEISKLLVDGANGVGGQKIEKLRGSLSNLDVEIRNTGRDGGVLNEGVGADFVQKEKVLPVGFGFKDVGMRCASLDGDADRLVYFYIPSDSSEKVELLDGDKILSLFALFIKEQLNALEDDEERKQSRLGVVQTAYANGASTDYLKHLGLDVVFAKTGVKHLHEKAAEFDIGIYFEANGHGTILFSESFLSWLVSKQKDLTAKGQGGSEEHKAVSRLMAVSNLINQAVGDALSGVLLVEVILQHLGWSIEKWNELYKDLPSRQIKVEVPDRTAVVTTSEETEALRPMGIQDAINSEIKKYSRGRAFIRPSGTEDVVRVYAEASTQEDADSLANSVAQLVKSFLGSS.

S68 functions as the Phosphoserine intermediate in the catalytic mechanism. Mg(2+) is bound by residues S68, D286, D288, and D290. S68 carries the post-translational modification Phosphoserine. Residues 386-388 (EAN), 518-522 (RPSGT), and R527 contribute to the substrate site.

This sequence belongs to the phosphohexose mutase family. The cofactor is Mg(2+).

The enzyme catalyses N-acetyl-alpha-D-glucosamine 1-phosphate = N-acetyl-D-glucosamine 6-phosphate. It functions in the pathway nucleotide-sugar biosynthesis; UDP-N-acetyl-alpha-D-glucosamine biosynthesis; N-acetyl-alpha-D-glucosamine 1-phosphate from alpha-D-glucosamine 6-phosphate (route I): step 2/2. Its function is as follows. Interconverts GlcNAc-6-P and GlcNAc-1-P. The protein is Phosphoacetylglucosamine mutase (DRT101) of Arabidopsis thaliana (Mouse-ear cress).